Here is a 272-residue protein sequence, read N- to C-terminus: Phosphonates import ATP-binding protein PhnC (272 aa).

An ABC transporter domain is found at 2-244 (LVFDKVNRVY…IQKRLYEIEH (243 aa)). An ATP-binding site is contributed by 35 to 42 (GPSGAGKS).

This sequence belongs to the ABC transporter superfamily. Phosphonates importer (TC 3.A.1.9.1) family. The complex is composed of two ATP-binding proteins (PhnC), two transmembrane proteins (PhnE) and a solute-binding protein (PhnD).

It is found in the cell inner membrane. It carries out the reaction phosphonate(out) + ATP + H2O = phosphonate(in) + ADP + phosphate + H(+). Functionally, part of the ABC transporter complex PhnCDE involved in phosphonates import. Responsible for energy coupling to the transport system. The sequence is that of Phosphonates import ATP-binding protein PhnC from Hydrogenovibrio crunogenus (strain DSM 25203 / XCL-2) (Thiomicrospira crunogena).